The following is a 291-amino-acid chain: MFLLITYPVFDPVAISLGPIAIRWYALAYIGGIMLGWLYARALLRSEKLWGGPAPISVVQLDDFILWVTIAIIVGGRVGYVLFYNPDYFIRYPAQIFQLWNGGMSFHGGFMGCVAAVILFCRRHGLPILSLGDVATAVGPIGLFLGRIANFINSELWGRPADPGLPWAMVFPNGGPLPRHPSQLYEAALEGILLFTILALMIRLGALKRPGLVLGSFIALYAMARIVAEFFREPDPQLGFLWGGLTMGMLLSIPMVIIGLAIVYAAWSRGSRASDAQASPNSGASTKVDRD.

Helical transmembrane passes span 24 to 44, 64 to 84, 100 to 120, and 125 to 145; these read WYALAYIGGIMLGWLYARALL, FILWVTIAIIVGGRVGYVLFY, WNGGMSFHGGFMGCVAAVILF, and GLPILSLGDVATAVGPIGLFL. Arg147 serves as a coordination point for a 1,2-diacyl-sn-glycero-3-phospho-(1'-sn-glycerol). The next 3 helical transmembrane spans lie at 187 to 207, 211 to 231, and 247 to 267; these read AALEGILLFTILALMIRLGAL, GLVLGSFIALYAMARIVAEFF, and MGMLLSIPMVIIGLAIVYAAW.

This sequence belongs to the Lgt family.

Its subcellular location is the cell inner membrane. It carries out the reaction L-cysteinyl-[prolipoprotein] + a 1,2-diacyl-sn-glycero-3-phospho-(1'-sn-glycerol) = an S-1,2-diacyl-sn-glyceryl-L-cysteinyl-[prolipoprotein] + sn-glycerol 1-phosphate + H(+). It functions in the pathway protein modification; lipoprotein biosynthesis (diacylglyceryl transfer). Its function is as follows. Catalyzes the transfer of the diacylglyceryl group from phosphatidylglycerol to the sulfhydryl group of the N-terminal cysteine of a prolipoprotein, the first step in the formation of mature lipoproteins. The polypeptide is Phosphatidylglycerol--prolipoprotein diacylglyceryl transferase (Nitrobacter winogradskyi (strain ATCC 25391 / DSM 10237 / CIP 104748 / NCIMB 11846 / Nb-255)).